The sequence spans 552 residues: HTH-type transcriptional regulator SgrR (552 aa).

An HTH marR-type domain is found at 1 to 116 (MPSGRLQQQF…LISHLGRSFR (116 aa)). Residues 26 to 49 (LNELADLLNCSRRHMRTLLNTMQA) constitute a DNA-binding region (H-T-H motif). Positions 163–493 (ELEADIAHHW…RDWQDDAAQW (331 aa)) are solute-binding.

Activates the small RNA gene sgrS under glucose-phosphate stress conditions as well as yfdZ. Represses its own transcription under both stress and non-stress conditions. Might act as a sensor of the intracellular accumulation of phosphoglucose by binding these molecules in its C-terminal solute-binding domain. This is HTH-type transcriptional regulator SgrR from Salmonella typhi.